A 224-amino-acid chain; its full sequence is MTEKRAVILLSGGLDSATVVAMAKAEGYSCYTMSFDYGQRHRAELNAAARVAHDLGVVEHKVIGLNLDGIGGSALTDSSIDVPEAPGEGIPVTYVPARNTVFLSLALGWAEVLEARDIFIGVNAVDYSGYPDCRPEFVEAFERMANLATKAGVEGQGFRIQAPLQNMSKAQIVQAGMARGVDYSLTVSCYQADDDGRACGKCDSCRLRADGFKAAGIEDPTRYF.

10–20 serves as a coordination point for ATP; the sequence is LSGGLDSATVV. Zn(2+) is bound by residues C189, C199, C202, and C205.

It belongs to the QueC family. The cofactor is Zn(2+).

The catalysed reaction is 7-carboxy-7-deazaguanine + NH4(+) + ATP = 7-cyano-7-deazaguanine + ADP + phosphate + H2O + H(+). Its pathway is purine metabolism; 7-cyano-7-deazaguanine biosynthesis. Catalyzes the ATP-dependent conversion of 7-carboxy-7-deazaguanine (CDG) to 7-cyano-7-deazaguanine (preQ(0)). The sequence is that of 7-cyano-7-deazaguanine synthase from Pseudomonas putida (strain ATCC 700007 / DSM 6899 / JCM 31910 / BCRC 17059 / LMG 24140 / F1).